The following is a 364-amino-acid chain: Sec-independent protein translocase protein TatC (364 aa).

7 helical membrane-spanning segments follow: residues 42-62, 107-127, 139-159, 160-180, 194-214, 225-245, and 246-266; these read IALL…PRIF, MIAA…SFIT, LTFV…AYLT, LSTG…SVLD, IFGL…AGIV, PEIF…DPFT, and MLAL…IGWL. The segment at 277–364 is disordered; the sequence is TSPYADLDDD…STDVTHGDIT (88 aa). Residues 282–295 show a composition bias toward acidic residues; that stretch reads DLDDDETSPLDFDD. Low complexity predominate over residues 301 to 320; sequence AASAGPAATATSPGTANPPG. Positions 324–344 are enriched in polar residues; that stretch reads PPGTANPVGTANPVGTGSSTP.

Belongs to the TatC family. As to quaternary structure, the Tat system comprises two distinct complexes: a TatABC complex, containing multiple copies of TatA, TatB and TatC subunits, and a separate TatA complex, containing only TatA subunits. Substrates initially bind to the TatABC complex, which probably triggers association of the separate TatA complex to form the active translocon.

It localises to the cell membrane. Its function is as follows. Part of the twin-arginine translocation (Tat) system that transports large folded proteins containing a characteristic twin-arginine motif in their signal peptide across membranes. Together with TatB, TatC is part of a receptor directly interacting with Tat signal peptides. This Frankia casuarinae (strain DSM 45818 / CECT 9043 / HFP020203 / CcI3) protein is Sec-independent protein translocase protein TatC.